The primary structure comprises 156 residues: uncharacterized protein (156 aa).

This is an uncharacterized protein from Invertebrate iridescent virus 3 (IIV-3).